A 266-amino-acid polypeptide reads, in one-letter code: MLTFIGLGLFDEYDISLKGLEAVREADLVYAEFYTSCLMGTNPEKMEKLYGKKVHLLSREDVEQQPDWLDKAKDKNVAFLTGGDTMVSTTHVDLRLRAEKLGIETHLIHGASIASAVSGLTGLQNYRFGKSASIPYPYESRRGAIIISETPYDTIKQNSELGLHTMIFLDIDKDKGYMTANHALELLLEVEKRRGEGIMERAVAVGIARAGSEKPVVKADYAESLKDFDFGNPLHILVVPGKLHFLEAEALVKLAAGPGKIMEETE.

Residues Leu9, Asp84, Val87, 112 to 113, Leu169, Ala210, and His235 contribute to the S-adenosyl-L-methionine site; that span reads SI.

This sequence belongs to the diphthine synthase family. Homodimer.

It carries out the reaction 2-[(3S)-amino-3-carboxypropyl]-L-histidyl-[translation elongation factor 2] + 3 S-adenosyl-L-methionine = diphthine-[translation elongation factor 2] + 3 S-adenosyl-L-homocysteine + 3 H(+). The protein operates within protein modification; peptidyl-diphthamide biosynthesis. S-adenosyl-L-methionine-dependent methyltransferase that catalyzes the trimethylation of the amino group of the modified target histidine residue in translation elongation factor 2 (EF-2), to form an intermediate called diphthine. The three successive methylation reactions represent the second step of diphthamide biosynthesis. The polypeptide is Diphthine synthase (Methanosarcina acetivorans (strain ATCC 35395 / DSM 2834 / JCM 12185 / C2A)).